The chain runs to 519 residues: Dolichol kinase (519 aa).

Residues 1–47 (MVAIIPHASFTTIKLTQKTEGSQMPTEEICKINMRTRKFDVGGNSRD) are Cytoplasmic-facing. Residues 48-68 (FECFYSNFVQTVILLGTFFYC) traverse the membrane as a helical segment. At 69–88 (VERLQPWSIVTADISYKQIF) the chain is on the lumenal side. The helical transmembrane segment at 89–109 (VNVFVVCLIMVGLIFTKYWQH) threads the bilayer. Residues 110–118 (GYKSLPKFD) are Cytoplasmic-facing. A helical transmembrane segment spans residues 119–139 (TIYSLYLPFMVSLLFDTSSTV). Topologically, residues 140-151 (INTILILSVLNS) are lumenal. Residues 152-172 (YRWRTQLVVIILQLCLIFFNF) traverse the membrane as a helical segment. The Cytoplasmic portion of the chain corresponds to 173 to 181 (EAGDRLKNI). Residues 182 to 203 (ISIVINSLLSLILKYIGQLKSL) traverse the membrane as a helical segment. At 204–223 (DNIDSNLFSILLTNILYVSE) the chain is on the lumenal side. A helical membrane pass occupies residues 224 to 244 (AGTVHFRILKGIILALTTIIS). Topologically, residues 245–253 (INYVLKKVM) are cytoplasmic. The chain crosses the membrane as a helical span at residues 254 to 274 (HFKPFMLSISFAIGLPLFANT). The Lumenal portion of the chain corresponds to 275–294 (FIHLEDGENPLLWLVKYILE). Residues 295–315 (STIRQKILFAWSSILILSIPS) traverse the membrane as a helical segment. Residues 316–326 (ILIEKDSLSLN) are Cytoplasmic-facing. Residues 327 to 347 (TSRKLWHFIIFLLIIPSFQMD) form a helical membrane-spanning segment. Residues 348–349 (SN) lie on the Lumenal side of the membrane. Residues 350–370 (FVKIALSGTIPVFLSIEYIRF) form a helical membrane-spanning segment. Residues 371 to 394 (QNLPPLGSAIELQLRRFADDRDHS) are Cytoplasmic-facing. A helical membrane pass occupies residues 395–415 (GPLIISYLYLLFGISTPLLMN). The Lumenal segment spans residues 416–417 (NS). A helical membrane pass occupies residues 418–438 (PMGLIGLGIGDSLASIIGKRY). The Cytoplasmic segment spans residues 439 to 449 (GRIRWKGTQKT). Residues 450–470 (LEGTLAFIVTSFIVCLVLLRF) form a helical membrane-spanning segment. At 471 to 472 (DK) the chain is on the lumenal side. A helical membrane pass occupies residues 473-493 (AAIFNHLTTLQLLTLCTLSGV). The Cytoplasmic segment spans residues 494–519 (LEGNSVLNDNILIPAFMMICEKLITL).

It belongs to the polyprenol kinase family.

It is found in the endoplasmic reticulum membrane. It catalyses the reaction a di-trans,poly-cis-dolichol + CTP = a di-trans,poly-cis-dolichyl phosphate + CDP + H(+). It participates in protein modification; protein glycosylation. In terms of biological role, catalyzes CTP-mediated phosphorylation of dolichol, the terminal step in de novo dolichyl monophosphate (Dol-P) biosynthesis. Dol-P is a lipid carrier essential for the synthesis of N-linked and O-linked oligosaccharides and for GPI anchors. In Saccharomyces cerevisiae (strain ATCC 204508 / S288c) (Baker's yeast), this protein is Dolichol kinase (SEC59).